The chain runs to 137 residues: Small ribosomal subunit protein bS16 (137 aa).

Positions 104-118 (ADEKKKPVLKPKTEK) are enriched in basic and acidic residues. Residues 104–137 (ADEKKKPVLKPKTEKAAPAPEAAAPEAESTEEQA) are disordered. Over residues 119–130 (AAPAPEAAAPEA) the composition is skewed to low complexity.

Belongs to the bacterial ribosomal protein bS16 family.

In Clavibacter michiganensis subsp. michiganensis (strain NCPPB 382), this protein is Small ribosomal subunit protein bS16.